A 6995-amino-acid polypeptide reads, in one-letter code: Fibrous sheath-interacting protein 2 (6995 aa).

3 disordered regions span residues 273-292, 308-336, and 351-476; these read EQKIEEQRRKSREESDRKKQ, DTGLKDDIGRNGFDYRGQNGTTFESSSKK, and GDQK…TDAP. Residues 359–396 show a composition bias toward polar residues; that stretch reads TSGQVSATVNQSQSSSKDVTKVSASSVTYPAEVQNSSS. Residues 397-421 show a composition bias toward basic and acidic residues; sequence EQKRSEVTKRLSDERGKNSTDDSAR. The span at 424–442 shows a compositional bias: polar residues; sequence IISTQLSPTRNAKLSQISL. Phosphoserine is present on Ser-430. The span at 443 to 452 shows a compositional bias: basic and acidic residues; the sequence is DHQKEEKEMK. A compositionally biased stretch (polar residues) spans 453 to 463; the sequence is STWNGGLSKKS. A coiled-coil region spans residues 665 to 692; it reads LEISLLYDKKAKAMDQIKNLKNVFVNFK. 9 disordered regions span residues 1452 to 1472, 2554 to 2595, 2699 to 2731, 3182 to 3270, 5489 to 5665, 5719 to 5740, 5823 to 5878, 5943 to 5996, and 6973 to 6995; these read PDPQPSCSHQNTETIDKDPPT, KSKR…VPQM, TKTKIKNKLSAGEKTPRESRSKTALGLPQTPQV, PVKM…PNFT, GPSA…KYKG, SKSSVKTDDRPMSKDKETMTEK, KDLS…SKSK, KEDE…PDKL, and SKVFSRSSGSIPKSSSPPHQDKR. Residues 2555 to 2565 are compositionally biased toward basic and acidic residues; sequence SKREGEMHDSS. Polar residues predominate over residues 3187–3204; the sequence is PSNTSDTPRTRRSSQGSV. The segment covering 3220–3231 has biased composition (low complexity); the sequence is SVTSNSSSHISS. Polar residues predominate over residues 3232–3250; the sequence is CVENTNKSLEPMGRSNSEA. Residues 3255-3265 are compositionally biased toward basic residues; it reads SRHKAHDHGQR. The segment covering 5496-5509 has biased composition (basic and acidic residues); that stretch reads DAKKEDESKVKPAT. 3 stretches are compositionally biased toward polar residues: residues 5523–5557, 5565–5625, and 5638–5650; these read MKSQGSQVQQLATSPPTSMKSQRIQVQQSVMSPPT, QVQQ…QSAM, and VQESSTSPPTTMK. 2 stretches are compositionally biased toward basic and acidic residues: residues 5719–5738 and 5829–5877; these read SKSSVKTDDRPMSKDKETMT and GHRD…ESKS. The span at 5982 to 5993 shows a compositional bias: polar residues; sequence SDVQKTPEQSSP. Over residues 6977 to 6995 the composition is skewed to low complexity; sequence SRSSGSIPKSSSPPHQDKR.

As to quaternary structure, may interact with AKAP4. As to expression, predominantly expressed in testis.

In terms of biological role, plays a role in spermatogenesis. This chain is Fibrous sheath-interacting protein 2 (Fsip2), found in Mus musculus (Mouse).